A 110-amino-acid chain; its full sequence is Integration host factor subunit alpha (110 aa).

The protein belongs to the bacterial histone-like protein family. As to quaternary structure, heterodimer of an alpha and a beta chain.

Functionally, this protein is one of the two subunits of integration host factor, a specific DNA-binding protein that functions in genetic recombination as well as in transcriptional and translational control. The sequence is that of Integration host factor subunit alpha from Methylococcus capsulatus (strain ATCC 33009 / NCIMB 11132 / Bath).